The sequence spans 698 residues: Polyphosphate kinase 1 (698 aa).

Residue Asn-46 participates in ATP binding. Positions 377 and 407 each coordinate Mg(2+). Catalysis depends on His-437, which acts as the Phosphohistidine intermediate. ATP is bound by residues Tyr-470, Arg-566, and His-594.

Belongs to the polyphosphate kinase 1 (PPK1) family. Mg(2+) is required as a cofactor. Post-translationally, an intermediate of this reaction is the autophosphorylated ppk in which a phosphate is covalently linked to a histidine residue through a N-P bond.

The enzyme catalyses [phosphate](n) + ATP = [phosphate](n+1) + ADP. Functionally, catalyzes the reversible transfer of the terminal phosphate of ATP to form a long-chain polyphosphate (polyP). The protein is Polyphosphate kinase 1 of Chlorobaculum tepidum (strain ATCC 49652 / DSM 12025 / NBRC 103806 / TLS) (Chlorobium tepidum).